The primary structure comprises 62 residues: Large ribosomal subunit protein bL32 (62 aa).

Belongs to the bacterial ribosomal protein bL32 family.

The chain is Large ribosomal subunit protein bL32 from Treponema denticola (strain ATCC 35405 / DSM 14222 / CIP 103919 / JCM 8153 / KCTC 15104).